Here is a 530-residue protein sequence, read N- to C-terminus: Bifunctional purine biosynthesis protein PurH (530 aa).

The MGS-like domain occupies 1–148; sequence MNNARPIRRA…KNHKDVTIVV (148 aa).

The protein belongs to the PurH family.

It catalyses the reaction (6R)-10-formyltetrahydrofolate + 5-amino-1-(5-phospho-beta-D-ribosyl)imidazole-4-carboxamide = 5-formamido-1-(5-phospho-D-ribosyl)imidazole-4-carboxamide + (6S)-5,6,7,8-tetrahydrofolate. The catalysed reaction is IMP + H2O = 5-formamido-1-(5-phospho-D-ribosyl)imidazole-4-carboxamide. It participates in purine metabolism; IMP biosynthesis via de novo pathway; 5-formamido-1-(5-phospho-D-ribosyl)imidazole-4-carboxamide from 5-amino-1-(5-phospho-D-ribosyl)imidazole-4-carboxamide (10-formyl THF route): step 1/1. The protein operates within purine metabolism; IMP biosynthesis via de novo pathway; IMP from 5-formamido-1-(5-phospho-D-ribosyl)imidazole-4-carboxamide: step 1/1. The chain is Bifunctional purine biosynthesis protein PurH from Vibrio vulnificus (strain YJ016).